We begin with the raw amino-acid sequence, 590 residues long: UvrABC system protein C (590 aa).

A GIY-YIG domain is found at 14 to 91; it reads DQPGCYLMKD…IKKHDPKYNV (78 aa). The 36-residue stretch at 196–231 folds into the UVR domain; it reads NEVKKELEEKMHEAAENLEFERAKELRDQIAHIEST.

This sequence belongs to the UvrC family. Interacts with UvrB in an incision complex.

Its subcellular location is the cytoplasm. Its function is as follows. The UvrABC repair system catalyzes the recognition and processing of DNA lesions. UvrC both incises the 5' and 3' sides of the lesion. The N-terminal half is responsible for the 3' incision and the C-terminal half is responsible for the 5' incision. The polypeptide is UvrABC system protein C (Bacillus subtilis (strain 168)).